Consider the following 417-residue polypeptide: MFSKQDQIQGYDDALLAAMNAEEQRQEDHIELIASENYTSKRVMQAQGSGLTNKYAEGYPGKRYYGGCEHVDKVEALAIERAKQLFGADYANVQPHSGSSANSAVYLALLQAGDTILGMSLAHGGHLTHGAKVSSSGKLYNAVQYGIDTKTGLIDYDEVERLAVECKPKMIVAGFSAYSKTLDFPRFRQIADKVGALLFVDMAHVAGLVAAGLYPNPLPYADVVTTTTHKTLRGPRGGLILAKANEEIEKKLNAAVFPGAQGGPLMHVIAGKAVCFKEALEPGFKAYQQQVIDNAQAMASVFIKRGYDVVSGGTDNHLFLVSLIRQGLTGKDADAALGRAHITVNKNAVPNDPQSPFVTSGLRIGTPAVTTRGFKVTQCVTLAGWICDILDNLGDADVEANVAQQVSALCADFPVYR.

Residues Leu121 and 125 to 127 (GHL) contribute to the (6S)-5,6,7,8-tetrahydrofolate site. The residue at position 230 (Lys230) is an N6-(pyridoxal phosphate)lysine. Residue 355–357 (SPF) participates in (6S)-5,6,7,8-tetrahydrofolate binding.

The protein belongs to the SHMT family. Homodimer. The cofactor is pyridoxal 5'-phosphate.

It localises to the cytoplasm. It catalyses the reaction (6R)-5,10-methylene-5,6,7,8-tetrahydrofolate + glycine + H2O = (6S)-5,6,7,8-tetrahydrofolate + L-serine. Its pathway is one-carbon metabolism; tetrahydrofolate interconversion. The protein operates within amino-acid biosynthesis; glycine biosynthesis; glycine from L-serine: step 1/1. In terms of biological role, catalyzes the reversible interconversion of serine and glycine with tetrahydrofolate (THF) serving as the one-carbon carrier. This reaction serves as the major source of one-carbon groups required for the biosynthesis of purines, thymidylate, methionine, and other important biomolecules. Also exhibits THF-independent aldolase activity toward beta-hydroxyamino acids, producing glycine and aldehydes, via a retro-aldol mechanism. This Pseudomonas fluorescens (strain Pf0-1) protein is Serine hydroxymethyltransferase 3.